A 132-amino-acid polypeptide reads, in one-letter code: L-ectoine synthase (132 aa).

The protein belongs to the ectoine synthase family.

It carries out the reaction (2S)-4-acetamido-2-aminobutanoate = L-ectoine + H2O. The protein operates within amine and polyamine biosynthesis; ectoine biosynthesis; L-ectoine from L-aspartate 4-semialdehyde: step 3/3. Functionally, catalyzes the circularization of gamma-N-acetyl-alpha,gamma-diaminobutyric acid (ADABA) to ectoine (1,4,5,6-tetrahydro-2-methyl-4-pyrimidine carboxylic acid), which is an excellent osmoprotectant. The sequence is that of L-ectoine synthase from Teredinibacter turnerae (strain ATCC 39867 / T7901).